We begin with the raw amino-acid sequence, 355 residues long: 3-isopropylmalate dehydrogenase (355 aa).

Substrate contacts are provided by arginine 90, arginine 100, arginine 128, and aspartate 222. Mg(2+) contacts are provided by aspartate 222, aspartate 246, and aspartate 250. 280–292 contacts NAD(+); sequence GSAPDIAGKGVAN.

This sequence belongs to the isocitrate and isopropylmalate dehydrogenases family. LeuB type 1 subfamily. Homodimer. Requires Mg(2+) as cofactor. The cofactor is Mn(2+).

The protein localises to the cytoplasm. It carries out the reaction (2R,3S)-3-isopropylmalate + NAD(+) = 4-methyl-2-oxopentanoate + CO2 + NADH. It participates in amino-acid biosynthesis; L-leucine biosynthesis; L-leucine from 3-methyl-2-oxobutanoate: step 3/4. Catalyzes the oxidation of 3-carboxy-2-hydroxy-4-methylpentanoate (3-isopropylmalate) to 3-carboxy-4-methyl-2-oxopentanoate. The product decarboxylates to 4-methyl-2 oxopentanoate. This chain is 3-isopropylmalate dehydrogenase, found in Cupriavidus metallidurans (strain ATCC 43123 / DSM 2839 / NBRC 102507 / CH34) (Ralstonia metallidurans).